A 538-amino-acid polypeptide reads, in one-letter code: (R)-citramalate synthase (538 aa).

The region spanning 3–268 (IKVYDTTLRD…IPKENLKKLF (266 aa)) is the Pyruvate carboxyltransferase domain.

This sequence belongs to the alpha-IPM synthase/homocitrate synthase family.

It catalyses the reaction pyruvate + acetyl-CoA + H2O = (3R)-citramalate + CoA + H(+). Its pathway is amino-acid biosynthesis; L-isoleucine biosynthesis; 2-oxobutanoate from pyruvate: step 1/3. Functionally, catalyzes the condensation of pyruvate and acetyl-coenzyme A to form (R)-citramalate. The chain is (R)-citramalate synthase from Thermotoga maritima (strain ATCC 43589 / DSM 3109 / JCM 10099 / NBRC 100826 / MSB8).